A 202-amino-acid chain; its full sequence is Large ribosomal subunit protein uL13 (202 aa).

It belongs to the universal ribosomal protein uL13 family.

The sequence is that of Large ribosomal subunit protein uL13 from Caenorhabditis elegans.